Reading from the N-terminus, the 324-residue chain is Methyltransferase pytC (324 aa).

A disordered region spans residues 1 to 28 (MTVRTAAEPPNRIEVDMDAPSLDTDSSC).

Belongs to the methyltransferase superfamily. LaeA methyltransferase family.

The protein operates within secondary metabolite biosynthesis. Functionally, methyltransferase; part of the gene cluster that mediates the biosynthesis of pyranterreones, a family of antioxidative compounds. The first step of pyranonigrins biosynthesis is performed by the hybrid PKS-NRPS synthetase pytA that condenses 4 malonyl-CoA units ato the acetyl starter unit by the modular PKS of pytA. The acyl chain is then connected to an L-serine through the amide bond by the modular NRPS of pytA. A tetramic acid is formed and released from the PKS-NRPS pytA to give pyranterreone 5 with the help of the thioesterase pytI. Pyranterreone 5 could be methylated by pytC to afford pyranterreone 6. Both pyranterreones 5 and 6 are subsequently oxidized by the FAD-linked oxidoreductase pytB and the cytochrome P450 monooxygenase pytD to form the fused gamma-pyrone core, resulting in pyranterreones 7 and 11, respectively. The hydroxy group at C-8 of pyranterreones 7 and 11 are dehydrated by the aspartyl protease pytH to form a delta-7 double bond to give pyranterreones 3 and 1, 2 accordingly. The exo-methylene of pyranterreone 3 could be reduced into a pendant methyl by reductase pytE to provide pyranterreone 4, also known as cordylactam. Pyranterreone 4 can be reconverted to pyranterreone 3 through pytB-catalyzed dehydrogenation or further oxidized to pyranterreones 9 and 10. The chain is Methyltransferase pytC from Aspergillus terreus.